A 977-amino-acid chain; its full sequence is Monofunctional C1-tetrahydrofolate synthase, mitochondrial (977 aa).

The N-terminal 31 residues, 1–31, are a transit peptide targeting the mitochondrion; sequence MSVRLPLLLRQLGRQQLPSGPACRLRELCRS. Residues 29 to 71 form a disordered region; that stretch reads CRSGSRSSSSGGGDPEGLRGRRLQDGQTFSSHGPGNPEAPGMD. The tract at residues 32–347 is methylenetetrahydrofolate dehydrogenase and cyclohydrolase; that stretch reads GSRSSSSGGG…REQQHRRWRL (316 aa). Residue lysine 188 is modified to N6-acetyllysine; alternate. An N6-succinyllysine; alternate modification is found at lysine 188. Positions 348 to 977 are formyltetrahydrofolate synthetase; the sequence is HCLKLQPLSP…TETEQVKGLF (630 aa). Serine 356 is modified (phosphoserine). 422-429 contacts ATP; that stretch reads TPLGEGKS. The residue at position 595 (lysine 595) is an N6-succinyllysine.

This sequence in the N-terminal section; belongs to the tetrahydrofolate dehydrogenase/cyclohydrolase family. The protein in the C-terminal section; belongs to the formate--tetrahydrofolate ligase family. In terms of assembly, homodimer.

The protein localises to the mitochondrion. It catalyses the reaction (6S)-5,6,7,8-tetrahydrofolate + formate + ATP = (6R)-10-formyltetrahydrofolate + ADP + phosphate. It participates in one-carbon metabolism; tetrahydrofolate interconversion. Its function is as follows. May provide the missing metabolic reaction required to link the mitochondria and the cytoplasm in the mammalian model of one-carbon folate metabolism complementing thus the enzymatic activities of MTHFD2. This is Monofunctional C1-tetrahydrofolate synthase, mitochondrial (Mthfd1l) from Mus musculus (Mouse).